We begin with the raw amino-acid sequence, 179 residues long: Translation initiation factor IF-3 (179 aa).

This sequence belongs to the IF-3 family. Monomer.

The protein localises to the cytoplasm. In terms of biological role, IF-3 binds to the 30S ribosomal subunit and shifts the equilibrium between 70S ribosomes and their 50S and 30S subunits in favor of the free subunits, thus enhancing the availability of 30S subunits on which protein synthesis initiation begins. This chain is Translation initiation factor IF-3, found in Zymomonas mobilis subsp. mobilis (strain ATCC 31821 / ZM4 / CP4).